We begin with the raw amino-acid sequence, 160 residues long: Cytochrome b6-f complex subunit 4 (160 aa).

3 helical membrane-spanning segments follow: residues 36-56 (LLYI…GLAV), 95-115 (LLGV…PFLE), and 131-151 (TVFL…TLPI).

It belongs to the cytochrome b family. PetD subfamily. The 4 large subunits of the cytochrome b6-f complex are cytochrome b6, subunit IV (17 kDa polypeptide, petD), cytochrome f and the Rieske protein, while the 4 small subunits are petG, petL, petM and petN. The complex functions as a dimer.

The protein localises to the plastid. It is found in the chloroplast thylakoid membrane. Its function is as follows. Component of the cytochrome b6-f complex, which mediates electron transfer between photosystem II (PSII) and photosystem I (PSI), cyclic electron flow around PSI, and state transitions. This Oryza nivara (Indian wild rice) protein is Cytochrome b6-f complex subunit 4.